A 577-amino-acid chain; its full sequence is Signal peptide peptidase-like 2B (577 aa).

Residues 1–19 (MAAARLAASLLLLAAQVAC) form the signal peptide. Over 20–168 (EFGVLRVVPQ…APSEPVMDYN (149 aa)) the chain is Lumenal. The region spanning 49-149 (LPHDLNKVSL…RDLQDIFRRF (101 aa)) is the PA domain. N-linked (GlcNAc...) asparagine glycosylation occurs at Asn91. The helical transmembrane segment at 169–189 (MVIIFIMAVGTVALGGYWAGS) threads the bilayer. At 190 to 216 (HDVKKYMKHKRDDVPEKQEDEAVDVTP) the chain is on the cytoplasmic side. The helical transmembrane segment at 217-237 (VMICVFVVMCCFMLVLLYYFY) threads the bilayer. Residues 238–239 (DR) lie on the Lumenal side of the membrane. The helical transmembrane segment at 240–260 (LVYVIIGIFCLASSTGLYSCL) threads the bilayer. The Cytoplasmic portion of the chain corresponds to 261-286 (APCVRKLPFCTCRVPDNNLPYFHKRP). The chain crosses the membrane as a helical span at residues 287 to 307 (QARMLLLALFCVTVSVVWGVF). At 308–312 (RNEDQ) the chain is on the lumenal side. The chain crosses the membrane as a helical span at residues 313-333 (WAWVLQDTLGIAFCLYMLRTI). Residues 334-341 (RLPTFKAC) lie on the Cytoplasmic side of the membrane. A helical transmembrane segment spans residues 342–362 (TLLLLVLFVYDIFFVFITPYL). Residue Asp352 is part of the active site. Over 363–405 (TKSGNSIMVEVATGPSNSSTHEKLPMVLKVPRLNTSPLSLCDR) the chain is Lumenal. A helical membrane pass occupies residues 406-426 (PFSLLGFGDILVPGLLVAYCH). Asp414 is an active-site residue. Residues 427 to 438 (RFDIQVQSSRIY) are Cytoplasmic-facing. The chain crosses the membrane as a helical span at residues 439–459 (FVACTIAYGLGLLVTFVALVL). The Lumenal segment spans residues 460 to 463 (MRHG). The helical transmembrane segment at 464-484 (QPALLYLVPCTLLTSCTVALW) threads the bilayer. Residues 465-467 (PAL) carry the PAL motif. Residues 485 to 577 (RREMGAFWTG…IPVVTPGTSA (93 aa)) are Cytoplasmic-facing. The tract at residues 502 to 577 (QTPWAAPQGP…IPVVTPGTSA (76 aa)) is disordered.

The protein belongs to the peptidase A22B family. In terms of assembly, monomer. Homodimer. Interacts with ITM2B and TNF. Post-translationally, glycosylated.

Its subcellular location is the cell membrane. The protein resides in the golgi apparatus membrane. It is found in the lysosome membrane. The protein localises to the endosome membrane. It localises to the membrane. Intramembrane-cleaving aspartic protease (I-CLiP) that cleaves type II membrane signal peptides in the hydrophobic plane of the membrane. Functions in ITM2B and TNF processing. Catalyzes the intramembrane cleavage of the anchored fragment of shed TNF-alpha (TNF), which promotes the release of the intracellular domain (ICD) for signaling to the nucleus. May play a role in the regulation of innate and adaptive immunity. This is Signal peptide peptidase-like 2B from Rattus norvegicus (Rat).